Here is a 308-residue protein sequence, read N- to C-terminus: Hydroxyacylglutathione hydrolase, mitochondrial (308 aa).

A mitochondrion-targeting transit peptide spans 1-13 (MVVGRGLLGRRSL). Zn(2+) contacts are provided by His102, His104, Asp106, and His107. Lys116 is subject to N6-acetyllysine. Positions 158 and 182 each coordinate Zn(2+). Residues 191–193 (KFY) and 221–223 (HEY) contribute to the substrate site. A Zn(2+)-binding site is contributed by His221. N6-acetyllysine; alternate is present on Lys229. Lys229 is subject to N6-succinyllysine; alternate. 297–300 (RREK) serves as a coordination point for substrate.

It belongs to the metallo-beta-lactamase superfamily. Glyoxalase II family. In terms of assembly, monomer. Requires Zn(2+) as cofactor. Expressed in liver and kidney.

The protein resides in the mitochondrion matrix. The protein localises to the cytoplasm. It catalyses the reaction an S-(2-hydroxyacyl)glutathione + H2O = a 2-hydroxy carboxylate + glutathione + H(+). The enzyme catalyses (R)-S-lactoylglutathione + H2O = (R)-lactate + glutathione + H(+). It participates in secondary metabolite metabolism; methylglyoxal degradation; (R)-lactate from methylglyoxal: step 2/2. Its function is as follows. Thiolesterase that catalyzes the hydrolysis of S-D-lactoyl-glutathione to form glutathione and D-lactic acid. In Homo sapiens (Human), this protein is Hydroxyacylglutathione hydrolase, mitochondrial (HAGH).